The primary structure comprises 459 residues: Argininosuccinate lyase (459 aa).

It belongs to the lyase 1 family. Argininosuccinate lyase subfamily.

Its subcellular location is the cytoplasm. It carries out the reaction 2-(N(omega)-L-arginino)succinate = fumarate + L-arginine. It functions in the pathway amino-acid biosynthesis; L-arginine biosynthesis; L-arginine from L-ornithine and carbamoyl phosphate: step 3/3. This chain is Argininosuccinate lyase, found in Prochlorococcus marinus (strain AS9601).